The following is a 108-amino-acid chain: Putative disulfide oxidoreductase YuzD (108 aa).

The cysteines at positions 16 and 19 are disulfide-linked.

In Bacillus subtilis (strain 168), this protein is Putative disulfide oxidoreductase YuzD (yuzD).